The following is a 174-amino-acid chain: Flavodoxin (174 aa).

The Flavodoxin-like domain maps to 4 to 165 (VGLFYGSDTG…RVEKWCKQIY (162 aa)).

Belongs to the flavodoxin family. FMN serves as cofactor.

Functionally, low-potential electron donor to a number of redox enzymes. This chain is Flavodoxin (fldA), found in Haemophilus influenzae (strain ATCC 51907 / DSM 11121 / KW20 / Rd).